The chain runs to 368 residues: MTAIIELNNLSVQFHQKGRLVTAVKNATLHIEKGDIYGVIGYSGAGKSTLVRTINLLQKPTEGQIVINGEKIFDSANPVKFTGAKLREFRQKIGMIFQHFNLLSEKTVFNNVAFALQHSQIEDKNGKKRYLTKKEKNDKVTELLKLVDLADLSDKYPAQLSGGQKQRVAIARALTNDPEILISDEGTSALDPKTTNQILDLLKSLHEKLGITVVLITHEMQVVKEIANKVAVMQNGEIIEQNSLIDIFAQPKEALTKQFIETTSSVNRFIASLSKTELLAQLADDEELIHLDYSGSELEDPVVSDITKKFDVTTNIFYGNVELLQGQPFGSLVLTLKGSSEHRAAAKAYFVERHLKFEVLGKIERTVD.

The region spanning 5–260 is the ABC transporter domain; sequence IELNNLSVQF…PKEALTKQFI (256 aa). 41–48 serves as a coordination point for ATP; that stretch reads GYSGAGKS.

This sequence belongs to the ABC transporter superfamily. Methionine importer (TC 3.A.1.24) family. The complex is composed of two ATP-binding proteins (MetN), two transmembrane proteins (MetI) and a solute-binding protein (MetQ).

It is found in the cell membrane. It catalyses the reaction L-methionine(out) + ATP + H2O = L-methionine(in) + ADP + phosphate + H(+). The catalysed reaction is D-methionine(out) + ATP + H2O = D-methionine(in) + ADP + phosphate + H(+). Functionally, part of the ABC transporter complex MetNIQ involved in methionine import. Responsible for energy coupling to the transport system. This Lactococcus lactis subsp. cremoris (strain SK11) protein is Methionine import ATP-binding protein MetN.